A 423-amino-acid polypeptide reads, in one-letter code: COP9 signalosome complex subunit 3 (423 aa).

A2 carries the post-translational modification N-acetylalanine. Positions 197-365 constitute a PCI domain; that stretch reads NFERALYFYE…GMVSFHDNPE (169 aa). A disordered region spans residues 402 to 423; the sequence is QFVQKSMGSQEDDSGNKPSSYS. Residues S407, S410, and S423 each carry the phosphoserine modification.

Belongs to the CSN3 family. As to quaternary structure, component of the CSN complex, composed of COPS1/GPS1, COPS2, COPS3, COPS4, COPS5, COPS6, COPS7 (COPS7A or COPS7B), COPS8 and COPS9 isoform 1. In the complex, it probably interacts directly with COPS1, COPS4, COPS8 and COPS9 isoform 1. Interacts with CK2 and PKD. Interacts with the translation initiation factor EIF3S6 and IKBKG. Interacts with ERCC6. In terms of tissue distribution, widely expressed. Expressed at high level in heart and skeletal muscle.

The protein resides in the cytoplasm. It is found in the nucleus. Functionally, component of the COP9 signalosome complex (CSN), a complex involved in various cellular and developmental processes. The CSN complex is an essential regulator of the ubiquitin (Ubl) conjugation pathway by mediating the deneddylation of the cullin subunits of SCF-type E3 ligase complexes, leading to decrease the Ubl ligase activity of SCF-type complexes such as SCF, CSA or DDB2. The complex is also involved in phosphorylation of p53/TP53, c-jun/JUN, IkappaBalpha/NFKBIA, ITPK1 and IRF8/ICSBP, possibly via its association with CK2 and PKD kinases. CSN-dependent phosphorylation of TP53 and JUN promotes and protects degradation by the Ubl system, respectively. The polypeptide is COP9 signalosome complex subunit 3 (COPS3) (Homo sapiens (Human)).